A 266-amino-acid polypeptide reads, in one-letter code: N-acetylneuraminate lyase B (266 aa).

T51 and T52 together coordinate aceneuramate. Y143 serves as the catalytic Proton donor. The Schiff-base intermediate with substrate role is filled by K173. Residues S175, G197, D199, E200, and S216 each coordinate aceneuramate.

Belongs to the DapA family. NanA subfamily. Homotetramer.

It localises to the cytoplasm. The catalysed reaction is aceneuramate = aldehydo-N-acetyl-D-mannosamine + pyruvate. It functions in the pathway amino-sugar metabolism; N-acetylneuraminate degradation. In terms of biological role, catalyzes the cleavage of N-acetylneuraminic acid (sialic acid) to form pyruvate and N-acetylmannosamine via a Schiff base intermediate. It prevents sialic acids from being recycled and returning to the cell surface. Involved in the N-glycolylneuraminic acid (Neu5Gc) degradation pathway. The chain is N-acetylneuraminate lyase B (npl-b) from Xenopus laevis (African clawed frog).